A 490-amino-acid chain; its full sequence is Nuclear transcription factor Y subunit beta (490 aa).

The tract at residues Met-1–Glu-48 is disordered. A compositionally biased stretch (low complexity) spans Ser-30 to Asn-43. A DNA-binding region spans residues Leu-53 to Ile-59. A subunit association domain (SAD) region spans residues Val-80–Ile-91. Disordered stretches follow at residues Glu-139–Gln-195 and Gln-221–Tyr-264. A compositionally biased stretch (low complexity) spans Gln-181–Gln-195. Residues Gln-188–Gln-219 are a coiled coil. A coiled-coil region spans residues Gln-269–Gln-307. Disordered regions lie at residues Asn-325 to Gln-370 and Gln-399 to Ser-490. Residues Gln-399 to Ser-468 show a composition bias toward low complexity. The span at Pro-478–Ser-490 shows a compositional bias: polar residues.

The protein belongs to the NFYB/HAP3 subunit family. In terms of assembly, heterotrimeric transcription factor composed of three components, nfyA, nfyB and nfyC. nfyB and nfyC must interact and dimerize for nfyA association and DNA binding.

The protein localises to the nucleus. In terms of biological role, component of the NF-Y/HAP transcription factor complex. The NF-Y complex stimulates the transcription of various genes by recognizing and binding to a CCAAT motif in promoters. The sequence is that of Nuclear transcription factor Y subunit beta (nfyB) from Dictyostelium discoideum (Social amoeba).